Consider the following 206-residue polypeptide: MGGKWSKSSVVGWPTVRERMRRAEPAADGVGAASRDLEKHGAITSSNTAATNAACAWLEAQEEEEVGFPVTPQVPLRPMTYKAAVDLSHFLKEKGGLEGLIHSQRRQDILDLWIYHTQGYFPDWQNYTPGPGVRYPLTFGWCYKLVPVEPDKVEEANKGENTSLLHPVSLHGMDDPEREVLEWRFDSRLAFHHVARELHPEYFKNC.

A lipid anchor (N-myristoyl glycine; by host) is attached at glycine 2. Serine 6 is subject to Phosphoserine; by host. The acidic; interacts with host PACS1 and PACS2; stabilizes the interaction of NEF/MHC-I with host AP1M1; necessary for MHC-I internalization stretch occupies residues 62–65 (EEEE). The interval 69–78 (PVTPQVPLRP) is SH3-binding; interaction with Src family tyrosine kinases. Positions 72-75 (PQVP) match the PxxP; stabilizes the interaction of NEF/MHC-I with host AP1M1; necessary for MHC-I internalization motif. A mediates dimerization, Nef-PTE1 interaction region spans residues 108–124 (DILDLWIYHTQGYFPDW). A mediates dimerization, Nef-PTE1 interaction, Nef-induced CD4 and MHC-I down-regulation and enhancement of infectivity region spans residues 108–124 (DILDLWIYHTQGYFPDW). The interval 148-180 (VEPDKVEEANKGENTSLLHPVSLHGMDDPEREV) is binding to ATP6V1H. The Dileucine internalization motif; necessary for CD4 internalization motif lies at 164–165 (LL). The Diacidic; necessary for CD4 internalization motif lies at 174–175 (DD).

It belongs to the lentivirus primate group Nef protein family. In terms of assembly, monomer; cytosolic form. Homodimer; membrane bound form. Interacts with Nef associated p21-activated kinase (PAK2); this interaction activates PAK2. Associates with the Nef-MHC-I-AP1 complex; this complex is required for MHC-I internalization. Interacts (via C-terminus) with host PI3-kinase. Interacts with host PACS1; this interaction seems to be weak. Interacts with host PACS2. Interacts with host LCK and MAPK3; these interactions inhibit the kinase activity of the latter. Interacts with host ATP6V1H; this interaction may play a role in CD4 endocytosis. Associates with the CD4-Nef-AP2 complex; this complex is required for CD4 internalization. Interacts with host AP2 subunit alpha and AP2 subunit sigma2. Interacts with TCR-zeta chain; this interaction up-regulates the Fas ligand (FasL) surface expression. Interacts with host HCK, LYN, and SRC; these interactions activate the Src family kinases. Interacts with MAP3K5; this interaction inhibits the Fas and TNFR-mediated death signals. Interacts with beta-COP and PTE1. Interacts with human RACK1; this increases Nef phosphorylation by PKC. Interacts with TP53; this interaction decreases the half-life of TP53, protecting the infected cell against p53-mediated apoptosis. The virion-associated Nef proteins are cleaved by the viral protease to release the soluble C-terminal core protein. Nef is probably cleaved concomitantly with viral structural proteins on maturation of virus particles. Post-translationally, myristoylated. In terms of processing, phosphorylated on serine residues, probably by host PKCdelta and theta.

It localises to the host cell membrane. The protein resides in the virion. The protein localises to the secreted. Its subcellular location is the host Golgi apparatus membrane. Its function is as follows. Factor of infectivity and pathogenicity, required for optimal virus replication. Alters numerous pathways of T-lymphocytes function and down-regulates immunity surface molecules in order to evade host defense and increase viral infectivity. Alters the functionality of other immunity cells, like dendritic cells, monocytes/macrophages and NK cells. Functionally, in infected CD4(+) T-lymphocytes, down-regulates the surface MHC-I, mature MHC-II, CD4, CD28, CCR5 and CXCR4 molecules. Mediates internalization and degradation of host CD4 through the interaction of with the cytoplasmic tail of CD4, the recruitment of AP-2 (clathrin adapter protein complex 2), internalization through clathrin coated pits, and subsequent transport to endosomes and lysosomes for degradation. Diverts host MHC-I molecules to the trans-Golgi network-associated endosomal compartments by an endocytic pathway to finally target them for degradation. MHC-I down-regulation may involve AP-1 (clathrin adapter protein complex 1) or possibly Src family kinase-ZAP70/Syk-PI3K cascade recruited by PACS2. In consequence infected cells are masked for immune recognition by cytotoxic T-lymphocytes. Decreasing the number of immune receptors also prevents reinfection by more HIV particles (superinfection). Down-regulates host SERINC3 and SERINC5 thereby excluding these proteins from the viral particles. Virion infectivity is drastically higher when SERINC3 or SERINC5 are excluded from the viral envelope, because these host antiviral proteins impair the membrane fusion event necessary for subsequent virion penetration. In terms of biological role, bypasses host T-cell signaling by inducing a transcriptional program nearly identical to that of anti-CD3 cell activation. Interaction with TCR-zeta chain up-regulates the Fas ligand (FasL). Increasing surface FasL molecules and decreasing surface MHC-I molecules on infected CD4(+) cells send attacking cytotoxic CD8+ T-lymphocytes into apoptosis. Plays a role in optimizing the host cell environment for viral replication without causing cell death by apoptosis. Protects the infected cells from apoptosis in order to keep them alive until the next virus generation is ready to strike. Inhibits the Fas and TNFR-mediated death signals by blocking MAP3K5/ASK1. Decreases the half-life of TP53, protecting the infected cell against p53-mediated apoptosis. Inhibits the apoptotic signals regulated by the Bcl-2 family proteins through the formation of a Nef/PI3-kinase/PAK2 complex that leads to activation of PAK2 and induces phosphorylation of host BAD. Its function is as follows. Extracellular Nef protein targets CD4(+) T-lymphocytes for apoptosis by interacting with CXCR4 surface receptors. The chain is Protein Nef from Homo sapiens (Human).